A 94-amino-acid polypeptide reads, in one-letter code: Aspartyl/glutamyl-tRNA(Asn/Gln) amidotransferase subunit C (94 aa).

The protein belongs to the GatC family. In terms of assembly, heterotrimer of A, B and C subunits.

It catalyses the reaction L-glutamyl-tRNA(Gln) + L-glutamine + ATP + H2O = L-glutaminyl-tRNA(Gln) + L-glutamate + ADP + phosphate + H(+). The catalysed reaction is L-aspartyl-tRNA(Asn) + L-glutamine + ATP + H2O = L-asparaginyl-tRNA(Asn) + L-glutamate + ADP + phosphate + 2 H(+). Allows the formation of correctly charged Asn-tRNA(Asn) or Gln-tRNA(Gln) through the transamidation of misacylated Asp-tRNA(Asn) or Glu-tRNA(Gln) in organisms which lack either or both of asparaginyl-tRNA or glutaminyl-tRNA synthetases. The reaction takes place in the presence of glutamine and ATP through an activated phospho-Asp-tRNA(Asn) or phospho-Glu-tRNA(Gln). The chain is Aspartyl/glutamyl-tRNA(Asn/Gln) amidotransferase subunit C from Desulfotalea psychrophila (strain LSv54 / DSM 12343).